Here is a 134-residue protein sequence, read N- to C-terminus: Small ribosomal subunit protein bS16 (134 aa).

Residues 79–134 (AGIAKRPSRNNPTKGEPGKKAQERLALAKQAEEEAAAKAAEAAAAAAAPAEEAASE) are disordered. The segment covering 115 to 134 (AKAAEAAAAAAAPAEEAASE) has biased composition (low complexity).

This sequence belongs to the bacterial ribosomal protein bS16 family.

The protein is Small ribosomal subunit protein bS16 of Brucella canis (strain ATCC 23365 / NCTC 10854 / RM-666).